The sequence spans 1074 residues: Insulin receptor substrate 2-A (1074 aa).

The segment at Met-1 to Val-64 is disordered. 2 short sequence motifs (YXXM motif) span residues Tyr-33–Met-36 and Tyr-145–Met-148. The PH domain maps to Asp-63–Asn-168. Residues Phe-193–Ser-297 form the IRS-type PTB domain. Disordered regions lie at residues Pro-326 to Arg-370, Cys-426 to Tyr-461, and Ser-475 to Asp-510. A compositionally biased stretch (polar residues) spans Ser-347 to Gly-361. Composition is skewed to low complexity over residues Cys-426–Ser-435 and Ser-442–Gly-454. A compositionally biased stretch (polar residues) spans Ser-475–Gln-504. 6 short sequence motifs (YXXM motif) span residues Tyr-496–Met-499, Tyr-592–Met-595, Tyr-605–Met-608, Tyr-631–Met-634, Tyr-663–Met-666, and Tyr-710–Met-713. Positions Thr-801–Arg-821 are disordered. The span at Ser-804–Ser-817 shows a compositional bias: low complexity. A YXXM motif 9 motif is present at residues Tyr-888–Met-891.

In terms of processing, phosphorylated by INSR.

Potentiates insulin signaling. The polypeptide is Insulin receptor substrate 2-A (irs2-a) (Xenopus laevis (African clawed frog)).